The chain runs to 583 residues: Protein LONG AFTER FAR-RED 3 (583 aa).

The helical transmembrane segment at 7 to 27 (FPVMIGFVSAAVFLLISVAYL) threads the bilayer. N-linked (GlcNAc...) asparagine glycosylation is found at asparagine 55 and asparagine 374.

Belongs to the metallo-dependent hydrolases superfamily. In terms of tissue distribution, expressed at low level in seedlings, roots, leaves, stems, flowers, and siliques.

Its subcellular location is the membrane. The protein localises to the cytoplasm. It localises to the perinuclear region. Required for phyA-controlled responses to continuous far-red light (FRc) conditions, including the inhibition of hypocotyl elongation and the regulation of XTH15/XTR7 expression. This Arabidopsis thaliana (Mouse-ear cress) protein is Protein LONG AFTER FAR-RED 3.